A 411-amino-acid polypeptide reads, in one-letter code: MGTCRESEPTQIFVPGPIIVGAGPSGLAVAACLSNRGVPSVILERTDCLASLWQKRTYDRLKLHLPKHFCELPLMPFPKNFPKYPSKQLFISYVESYAARFNIKPVFNQTVEKAEFDDASGLWNVKTQDGVYTSTWLVVATGENAEPVFPNIPGLKKFTGPVVHTSAYKSGSAFANRKVLVVGCGNSGMEVSLDLCRYNALPHMVVRNSVHVLPRDFFGLSTFGIAMTLLKWFPLKLVDKFLLLLANSTLGNTDLLGLRRPKTGPIELKNVTGKTPVLDVGAISLIRSGQIKVTQAVKEITRNGAKFLNGKEIEFDSIILATGYKSNVPDWLKENSFFTKEGMPKTPFPNGWKGEKGLYTVGFTRRGLSGTAYDAVKIAEDITDQWMKFNGPLSCRNICSSHIIHLHFNKS.

An FAD-binding site is contributed by 21–26 (GAGPSG). Residue 183-188 (GCGNSG) coordinates NADP(+).

Belongs to the FMO family. FAD is required as a cofactor. Expressed in leaves, stems, flowers, buds and siliques. Detected in the apical gynoecium and in the developing ovules.

The protein resides in the cytoplasm. Its subcellular location is the endoplasmic reticulum membrane. The catalysed reaction is indole-3-pyruvate + NADPH + O2 + H(+) = (indol-3-yl)acetate + CO2 + NADP(+) + H2O. It participates in plant hormone metabolism; auxin biosynthesis. Its function is as follows. Involved in auxin biosynthesis. Both isoforms are catalitically active. Involved during embryogenesis and seedling development. Required for the formation of floral organs and vascular tissues. Belongs to the set of redundant YUCCA genes probably responsible for auxin biosynthesis in shoots. The polypeptide is Probable indole-3-pyruvate monooxygenase YUCCA4 (YUC4) (Arabidopsis thaliana (Mouse-ear cress)).